A 379-amino-acid polypeptide reads, in one-letter code: Cytochrome b (379 aa).

A run of 4 helical transmembrane segments spans residues 33 to 53 (FGSL…FLAM), 77 to 98 (WTIR…FIHV), 113 to 133 (WNVG…GYVL), and 178 to 198 (FFAL…IHLL). Heme b-binding residues include histidine 83 and histidine 97. Heme b is bound by residues histidine 182 and histidine 196. Position 201 (histidine 201) interacts with a ubiquinone. 4 helical membrane passes run 226-246 (TKDF…ALFY), 288-308 (LGGV…PFLQ), 320-340 (LSQF…WIGG), and 347-367 (FINI…FIMP).

It belongs to the cytochrome b family. In terms of assembly, the cytochrome bc1 complex contains 11 subunits: 3 respiratory subunits (MT-CYB, CYC1 and UQCRFS1), 2 core proteins (UQCRC1 and UQCRC2) and 6 low-molecular weight proteins (UQCRH/QCR6, UQCRB/QCR7, UQCRQ/QCR8, UQCR10/QCR9, UQCR11/QCR10 and a cleavage product of UQCRFS1). This cytochrome bc1 complex then forms a dimer. Heme b serves as cofactor.

Its subcellular location is the mitochondrion inner membrane. Component of the ubiquinol-cytochrome c reductase complex (complex III or cytochrome b-c1 complex) that is part of the mitochondrial respiratory chain. The b-c1 complex mediates electron transfer from ubiquinol to cytochrome c. Contributes to the generation of a proton gradient across the mitochondrial membrane that is then used for ATP synthesis. This is Cytochrome b (MT-CYB) from Lepilemur ankaranensis (Ankarana sportive lemur).